Consider the following 702-residue polypeptide: Zinc finger CCCH domain-containing protein 62 (702 aa).

The tract at residues methionine 1 to alanine 77 is disordered. Residues glutamate 18–glutamate 54 show a composition bias toward acidic residues. The SAP domain occupies leucine 132–isoleucine 166. 4 disordered regions span residues glutamate 288 to glutamine 349, serine 405 to proline 532, glycine 546 to histidine 602, and glutamine 634 to arginine 673. The segment covering lysine 298 to glycine 325 has biased composition (basic and acidic residues). Composition is skewed to polar residues over residues glutamine 326–glutamine 349 and serine 405–serine 419. Positions glutamine 430 to glutamine 448 are enriched in low complexity. Polar residues-rich tracts occupy residues serine 472 to glycine 502, glutamine 522 to proline 532, glycine 546 to serine 565, and proline 575 to glycine 591. A C3H1-type zinc finger spans residues phenylalanine 674 to arginine 702.

This chain is Zinc finger CCCH domain-containing protein 62, found in Oryza sativa subsp. japonica (Rice).